A 569-amino-acid polypeptide reads, in one-letter code: Formate hydrogenlyase subunit 5 (569 aa).

The propeptide occupies 538 to 569; the sequence is MTVVDVRKKKSKVVPYKELERYSIERKNSPLK.

This sequence belongs to the complex I 49 kDa subunit family. FHL comprises of a formate dehydrogenase, unidentified electron carriers and a hydrogenase (isoenzyme 3). In this non-energy conserving pathway molecular hydrogen and carbodioxide from formate are released. [4Fe-4S] cluster is required as a cofactor. The cofactor is Ni(2+).

This Escherichia coli (strain K12) protein is Formate hydrogenlyase subunit 5 (hycE).